A 357-amino-acid polypeptide reads, in one-letter code: SPbeta prophage-derived pesticidal crystal protein-like YokG (357 aa).

The protein belongs to the cry6A endotoxin family.

The polypeptide is SPbeta prophage-derived pesticidal crystal protein-like YokG (yokG) (Bacillus subtilis (strain 168)).